Here is a 208-residue protein sequence, read N- to C-terminus: Probable thymidylate kinase (208 aa).

9-16 (GIDGAGKS) serves as a coordination point for ATP.

The protein belongs to the thymidylate kinase family.

The catalysed reaction is dTMP + ATP = dTDP + ADP. The polypeptide is Probable thymidylate kinase (Thermococcus gammatolerans (strain DSM 15229 / JCM 11827 / EJ3)).